The following is a 324-amino-acid chain: tRNA-modifying protein YgfZ (324 aa).

Trp184 contacts folate.

It belongs to the tRNA-modifying YgfZ family.

The protein resides in the cytoplasm. Its function is as follows. Folate-binding protein involved in regulating the level of ATP-DnaA and in the modification of some tRNAs. It is probably a key factor in regulatory networks that act via tRNA modification, such as initiation of chromosomal replication. The chain is tRNA-modifying protein YgfZ from Vibrio vulnificus (strain YJ016).